A 207-amino-acid chain; its full sequence is Urease accessory protein UreG (207 aa).

12 to 19 is a binding site for GTP; it reads GPVGAGKT.

It belongs to the SIMIBI class G3E GTPase family. UreG subfamily. Homodimer. UreD, UreF and UreG form a complex that acts as a GTP-hydrolysis-dependent molecular chaperone, activating the urease apoprotein by helping to assemble the nickel containing metallocenter of UreC. The UreE protein probably delivers the nickel.

Its subcellular location is the cytoplasm. Facilitates the functional incorporation of the urease nickel metallocenter. This process requires GTP hydrolysis, probably effectuated by UreG. This chain is Urease accessory protein UreG, found in Cereibacter sphaeroides (strain ATCC 17029 / ATH 2.4.9) (Rhodobacter sphaeroides).